A 379-amino-acid chain; its full sequence is Cobalt-precorrin-5B C(1)-methyltransferase (379 aa).

It belongs to the CbiD family.

The catalysed reaction is Co-precorrin-5B + S-adenosyl-L-methionine = Co-precorrin-6A + S-adenosyl-L-homocysteine. It functions in the pathway cofactor biosynthesis; adenosylcobalamin biosynthesis; cob(II)yrinate a,c-diamide from sirohydrochlorin (anaerobic route): step 6/10. Catalyzes the methylation of C-1 in cobalt-precorrin-5B to form cobalt-precorrin-6A. The chain is Cobalt-precorrin-5B C(1)-methyltransferase from Klebsiella pneumoniae subsp. pneumoniae (strain ATCC 700721 / MGH 78578).